Reading from the N-terminus, the 301-residue chain is Diaminopimelate epimerase (301 aa).

Substrate-binding residues include N15, Q47, and N67. Residue C76 is the Proton donor of the active site. Residues 77 to 78, N163, N197, and 215 to 216 each bind substrate; these read GN and ER. C224 serves as the catalytic Proton acceptor. 225 to 226 contacts substrate; that stretch reads GS.

This sequence belongs to the diaminopimelate epimerase family. Homodimer.

It localises to the cytoplasm. It carries out the reaction (2S,6S)-2,6-diaminopimelate = meso-2,6-diaminopimelate. It participates in amino-acid biosynthesis; L-lysine biosynthesis via DAP pathway; DL-2,6-diaminopimelate from LL-2,6-diaminopimelate: step 1/1. In terms of biological role, catalyzes the stereoinversion of LL-2,6-diaminopimelate (L,L-DAP) to meso-diaminopimelate (meso-DAP), a precursor of L-lysine and an essential component of the bacterial peptidoglycan. This Rhizobium rhizogenes (strain K84 / ATCC BAA-868) (Agrobacterium radiobacter) protein is Diaminopimelate epimerase.